Reading from the N-terminus, the 304-residue chain is UPF0282 protein TSIB_1029 (304 aa).

It belongs to the UPF0282 family.

The sequence is that of UPF0282 protein TSIB_1029 from Thermococcus sibiricus (strain DSM 12597 / MM 739).